The primary structure comprises 255 residues: Receptor expression-enhancing protein 3 (255 aa).

Transmembrane regions (helical) follow at residues 1–21, 35–55, and 59–79; these read MVSW…YPAY, YVRW…ETVA, and VAWF…LLSP. A disordered region spans residues 158–242; it reads TIQGDEPVGQ…KGRKEVRYGS (85 aa). The residue at position 201 (T201) is a Phosphothreonine. The residue at position 210 (S210) is a Phosphoserine. Residues 222–231 are compositionally biased toward polar residues; the sequence is RSQSMKSVKT.

The protein belongs to the DP1 family. Expressed in circumvallate papillae.

The protein resides in the endoplasmic reticulum membrane. Microtubule-binding protein required to ensure proper cell division and nuclear envelope reassembly by sequestering the endoplasmic reticulum away from chromosomes during mitosis. Probably acts by clearing the endoplasmic reticulum membrane from metaphase chromosomes. This chain is Receptor expression-enhancing protein 3 (REEP3), found in Homo sapiens (Human).